A 582-amino-acid polypeptide reads, in one-letter code: Putative G-protein coupled receptor B0244.10 (582 aa).

The next 4 helical transmembrane spans lie at 25–45 (LYIILISMWTFSLAIAIPLGL), 70–90 (ITFSIACISLAITASLTGFAV), 120–140 (WTFFALIVICLIELLPFGLVI), and 159–179 (LLVQSIISSVETLVGSLVFLT). Asn-190 carries N-linked (GlcNAc...) asparagine glycosylation. A helical transmembrane segment spans residues 199-218 (LTLGKWFIALYRFLFQMTNI). Asn-221 and Asn-237 each carry an N-linked (GlcNAc...) asparagine glycan. Helical transmembrane passes span 253-273 (SLMIWMGFYIPSAMCFLAVLV), 296-316 (YIFVVVRLSAAILIALCIIII), 329-349 (TFAFFAVLFIIYDFSILSLLG), 377-397 (IYIIAFAIVLFSVCVAIPFGL), and 421-441 (WLLFCIACLILMGCTGTLLFV). N-linked (GlcNAc...) asparagine glycosylation occurs at Asn-457. The next 2 helical transmembrane spans lie at 475-495 (TILVILCCVELIPTGLLAAFG) and 513-533 (LIFPAIVSSLETFLGSITFLL). Asn-538 is a glycosylation site (N-linked (GlcNAc...) asparagine).

Belongs to the G-protein coupled receptor 1 family. B0244 subfamily.

It localises to the cell membrane. The sequence is that of Putative G-protein coupled receptor B0244.10 from Caenorhabditis elegans.